The following is a 171-amino-acid chain: ATP synthase subunit b (171 aa).

A helical membrane pass occupies residues 2–22 (VLVKMALGFLILLSPLCAMEL).

The protein belongs to the ATPase B chain family. As to quaternary structure, F-type ATPases have 2 components, F(1) - the catalytic core - and F(0) - the membrane proton channel. F(1) has five subunits: alpha(3), beta(3), gamma(1), delta(1), epsilon(1). F(0) has three main subunits: a(1), b(2) and c(10-14). The alpha and beta chains form an alternating ring which encloses part of the gamma chain. F(1) is attached to F(0) by a central stalk formed by the gamma and epsilon chains, while a peripheral stalk is formed by the delta and b chains.

The protein localises to the cell inner membrane. In terms of biological role, f(1)F(0) ATP synthase produces ATP from ADP in the presence of a proton or sodium gradient. F-type ATPases consist of two structural domains, F(1) containing the extramembraneous catalytic core and F(0) containing the membrane proton channel, linked together by a central stalk and a peripheral stalk. During catalysis, ATP synthesis in the catalytic domain of F(1) is coupled via a rotary mechanism of the central stalk subunits to proton translocation. Functionally, component of the F(0) channel, it forms part of the peripheral stalk, linking F(1) to F(0). In Helicobacter acinonychis (strain Sheeba), this protein is ATP synthase subunit b.